The following is a 50-amino-acid chain: Large ribosomal subunit protein eL40 (50 aa).

Belongs to the eukaryotic ribosomal protein eL40 family.

The sequence is that of Large ribosomal subunit protein eL40 from Aeropyrum pernix (strain ATCC 700893 / DSM 11879 / JCM 9820 / NBRC 100138 / K1).